The following is a 534-amino-acid chain: Putative ammonium transporter 1 (534 aa).

Transmembrane regions (helical) follow at residues serine 31 to leucine 51, leucine 69 to glycine 89, phenylalanine 115 to glutamate 135, phenylalanine 139 to histidine 159, phenylalanine 184 to isoleucine 204, isoleucine 223 to leucine 243, alanine 263 to valine 283, tryptophan 291 to cysteine 311, alanine 318 to isoleucine 338, leucine 346 to isoleucine 366, and isoleucine 401 to leucine 421.

This sequence belongs to the ammonia transporter channel (TC 1.A.11.2) family.

It localises to the membrane. In terms of biological role, involved in the uptake of ammonia. This Caenorhabditis elegans protein is Putative ammonium transporter 1 (amt-1).